The following is a 420-amino-acid chain: O-methyltransferase opaF (420 aa).

Residues 262–263 (GG), aspartate 287, and 308–309 (DL) contribute to the S-adenosyl-L-methionine site. Histidine 328 functions as the Proton acceptor in the catalytic mechanism.

Belongs to the class I-like SAM-binding methyltransferase superfamily. Cation-independent O-methyltransferase family.

It functions in the pathway secondary metabolite biosynthesis. Functionally, O-methyltransferase; part of the gene cluster that mediates the biosynthesis of oxepinamides, derivatives of anthranilyl-containing tripeptides that share an oxepin ring and a fused pyrimidinone moiety. The nonribosomal peptide synthetase (NRPS) opaA assembles the quinazolinone core with D-Phe incorporation. The first adenylation domain (A1) of opaA loads and activates anthranilic acid whereas the second A domain (A2) is for activating of L-Phe, which is then converted to D-form by the E domain. The third A domain (A3) is responsible for L-Ile activation and the terminal condensation domain C3 for cyclization and releasing the NRPS product protuboxepin K. The cytochrome P450 monooxygenase opaB then catalyzes alone the oxepin ring formation to convert protuboxepin K into protuboxepin A. The flavoenzyme opaC installs subsequently one hydroxyl group at the oxepin ring, accompanied by double bond migration, to form 15-epi-oxepinamide E. The epimerase opaE changes the D-Phe residue back to L-form, leading to oxepinamide E, which is further methylated at the hydroxyl group at C-12 by the O-methyltransferase OpaF to yield oxepinamide F. The protein is O-methyltransferase opaF of Aspergillus ustus.